Here is a 474-residue protein sequence, read N- to C-terminus: Glutamate--tRNA ligase 1 (474 aa).

The 'HIGH' region signature appears at 10 to 20 (PSPTGFLHIGG). The 'KMSKS' region signature appears at 239–243 (KLSKR). Position 242 (K242) interacts with ATP.

This sequence belongs to the class-I aminoacyl-tRNA synthetase family. Glutamate--tRNA ligase type 1 subfamily. In terms of assembly, monomer.

The protein resides in the cytoplasm. The enzyme catalyses tRNA(Glu) + L-glutamate + ATP = L-glutamyl-tRNA(Glu) + AMP + diphosphate. Catalyzes the attachment of glutamate to tRNA(Glu) in a two-step reaction: glutamate is first activated by ATP to form Glu-AMP and then transferred to the acceptor end of tRNA(Glu). The sequence is that of Glutamate--tRNA ligase 1 from Methylobacterium sp. (strain 4-46).